The chain runs to 127 residues: Photosystem II extrinsic protein U (127 aa).

The first 31 residues, 1 to 31, serve as a signal peptide directing secretion; it reads MSRLFRRLSTLLLCSLLVLGVWLTQPLSVQA.

Belongs to the PsbU family. PSII is composed of 1 copy each of membrane proteins PsbA, PsbB, PsbC, PsbD, PsbE, PsbF, PsbH, PsbI, PsbJ, PsbK, PsbL, PsbM, PsbT, PsbX, PsbY, PsbZ, Psb30/Ycf12, peripheral proteins PsbO, CyanoQ (PsbQ), PsbU, PsbV and a large number of cofactors. It forms dimeric complexes.

It is found in the cellular thylakoid membrane. Its function is as follows. One of the extrinsic, lumenal subunits of photosystem II (PSII). PSII is a light-driven water plastoquinone oxidoreductase, using light energy to abstract electrons from H(2)O, generating a proton gradient subsequently used for ATP formation. The extrinsic proteins stabilize the structure of photosystem II oxygen-evolving complex (OEC), the ion environment of oxygen evolution and protect the OEC against heat-induced inactivation. The polypeptide is Photosystem II extrinsic protein U (Synechococcus sp. (strain RCC307)).